Reading from the N-terminus, the 124-residue chain is Pal-related lipoprotein (124 aa).

An N-terminal signal peptide occupies residues 1–18; it reads MRYRAVFPMLIIVFALSG. A lipid anchor (N-palmitoyl cysteine) is attached at C19. The S-diacylglycerol cysteine moiety is linked to residue C19.

The protein localises to the cell membrane. This is Pal-related lipoprotein (slp) from Bacillus subtilis (strain 168).